The following is a 278-amino-acid chain: Sulfur carrier protein FdhD (278 aa).

The Cysteine persulfide intermediate role is filled by Cys-113. 251 to 256 (FCRNGR) lines the Mo-bis(molybdopterin guanine dinucleotide) pocket.

This sequence belongs to the FdhD family.

It is found in the cytoplasm. Its function is as follows. Required for formate dehydrogenase (FDH) activity. Acts as a sulfur carrier protein that transfers sulfur from IscS to the molybdenum cofactor prior to its insertion into FDH. The polypeptide is Sulfur carrier protein FdhD (Shewanella oneidensis (strain ATCC 700550 / JCM 31522 / CIP 106686 / LMG 19005 / NCIMB 14063 / MR-1)).